The chain runs to 263 residues: N-acyl homoserine lactonase AttM (263 aa).

Residues H103, H105, D107, H108, H180, D202, and H247 each contribute to the Zn(2+) site.

This sequence belongs to the metallo-beta-lactamase superfamily. Zn(2+) is required as a cofactor.

The catalysed reaction is an N-acyl-L-homoserine lactone + H2O = an N-acyl-L-homoserine + H(+). This chain is N-acyl homoserine lactonase AttM, found in Rhizobium johnstonii (strain DSM 114642 / LMG 32736 / 3841) (Rhizobium leguminosarum bv. viciae).